The chain runs to 326 residues: Peroxidase 41 (326 aa).

Positions 1–20 (MSSVINVLFVVLVFVPSIYS) are cleaved as a signal peptide. N25 is a glycosylation site (N-linked (GlcNAc...) asparagine). Disulfide bonds link C35-C116, C68-C73, C122-C318, and C201-C228. H66 acts as the Proton acceptor in catalysis. Positions 67, 72, 74, and 76 each coordinate Ca(2+). A substrate-binding site is contributed by P164. A glycan (N-linked (GlcNAc...) asparagine) is linked at N167. H194 lines the heme b pocket. A Ca(2+)-binding site is contributed by T195. The N-linked (GlcNAc...) asparagine glycan is linked to N234. Residues D242, T245, and D250 each coordinate Ca(2+). A glycan (N-linked (GlcNAc...) asparagine) is linked at N286.

Belongs to the peroxidase family. Classical plant (class III) peroxidase subfamily. Heme b serves as cofactor. Requires Ca(2+) as cofactor.

The protein localises to the secreted. It carries out the reaction 2 a phenolic donor + H2O2 = 2 a phenolic radical donor + 2 H2O. Functionally, removal of H(2)O(2), oxidation of toxic reductants, biosynthesis and degradation of lignin, suberization, auxin catabolism, response to environmental stresses such as wounding, pathogen attack and oxidative stress. These functions might be dependent on each isozyme/isoform in each plant tissue. The polypeptide is Peroxidase 41 (PER41) (Arabidopsis thaliana (Mouse-ear cress)).